The primary structure comprises 65 residues: Large ribosomal subunit protein bL35 (65 aa).

The disordered stretch occupies residues Met-1 to Met-65. Composition is skewed to basic residues over residues Ala-10 to Ser-19 and Leu-33 to Ser-47. Basic and acidic residues predominate over residues Asn-54 to Met-65.

This sequence belongs to the bacterial ribosomal protein bL35 family.

In Desulfosudis oleivorans (strain DSM 6200 / JCM 39069 / Hxd3) (Desulfococcus oleovorans), this protein is Large ribosomal subunit protein bL35.